Here is a 451-residue protein sequence, read N- to C-terminus: Molybdate-anion transporter (451 aa).

The next 12 membrane-spanning stretches (helical) occupy residues 1-21 (MLVTAYLFLLGLLALWGVLEF), 45-65 (YDFYRTYFPALAADWLQGPYL), 79-99 (IAIIYVCGFGASVFAGLVSVP), 130-150 (FVLMTGRVLGGFSSSLLFSCF), 180-200 (NGGIAIAAGITANVCAEWLGL), 201-221 (GPASPSVLAVPLLVLSVVLVI), 251-271 (VLLLGTIQALFESVVYIFIFL), 281-301 (APLGIAFSSFMAASAVGSSLY), 316-336 (VLCLSILMVFFSLFMLTFSTA), 346-366 (LLAFLLIELACGLYFPAMRFL), 378-398 (GVLNWFRVPLNLLAGLGLLVL), and 410-430 (MFSLCAVTMLLALLCVVSLFT).

The protein belongs to the major facilitator superfamily.

It localises to the cell membrane. Mediates high-affinity intracellular uptake of the rare oligo-element molybdenum. This is Molybdate-anion transporter (mfsd5) from Xenopus laevis (African clawed frog).